Consider the following 283-residue polypeptide: uncharacterized protein (283 aa).

Residues 172-270 (EAIRDYIDER…ERSPSEYRRQ (99 aa)) form the HTH araC/xylS-type domain. DNA-binding regions (H-T-H motif) lie at residues 189 to 210 (ESVAQAFYISPNYLSHLFQKTG) and 237 to 260 (VKEVAHACGFVDSNYFCRLFRKNT).

This is an uncharacterized protein from Escherichia coli (strain K12).